We begin with the raw amino-acid sequence, 260 residues long: Triosephosphate isomerase (260 aa).

Substrate is bound at residue 11–13 (NWK). Histidine 103 functions as the Electrophile in the catalytic mechanism. Glutamate 175 functions as the Proton acceptor in the catalytic mechanism. Substrate-binding positions include glycine 181, serine 220, and 241 to 242 (GG).

The protein belongs to the triosephosphate isomerase family. Homodimer.

The protein localises to the cytoplasm. It carries out the reaction D-glyceraldehyde 3-phosphate = dihydroxyacetone phosphate. It participates in carbohydrate biosynthesis; gluconeogenesis. The protein operates within carbohydrate degradation; glycolysis; D-glyceraldehyde 3-phosphate from glycerone phosphate: step 1/1. Functionally, involved in the gluconeogenesis. Catalyzes stereospecifically the conversion of dihydroxyacetone phosphate (DHAP) to D-glyceraldehyde-3-phosphate (G3P). This is Triosephosphate isomerase from Shewanella sediminis (strain HAW-EB3).